A 1319-amino-acid polypeptide reads, in one-letter code: Uromodulin-like 1 (1319 aa).

The first 22 residues, 1–22 (MMSRTVRLVLLALACTVDLSQA), serve as a signal peptide directing secretion. The Extracellular segment spans residues 23 to 1273 (SGFTENGLSL…CTKPVLGTGY (1251 aa)). The 74-residue stretch at 34 to 107 (SYQLCSYPVT…FEQLGLYCVL (74 aa)) folds into the EMI domain. 3 cysteine pairs are disulfide-bonded: Cys-38–Cys-95, Cys-62–Cys-71, and Cys-94–Cys-105. Asn-90 carries an N-linked (GlcNAc...) asparagine glycan. Asn-110 carries an N-linked (GlcNAc...) asparagine glycan. The region spanning 115 to 159 (FASRPGVCPTAEAEPLSPSCSLDTDCSGLQKCCSWPGGRHCVSPT) is the WAP domain. Asn-172, Asn-193, and Asn-243 each carry an N-linked (GlcNAc...) asparagine glycan. The EGF-like 1; calcium-binding domain occupies 265–306 (DVNECLHSELQACSVREQCRNLEGSYQCVSSQRLNHTDEDCP). 2 cysteine pairs are disulfide-bonded: Cys-269–Cys-283 and Cys-277–Cys-292. Residues 307–391 (PIRDFVALNV…ATLVVKTDAQ (85 aa)) enclose the Fibronectin type-III 1 domain. N-linked (GlcNAc...) asparagine glycosylation occurs at Asn-315. Positions 389-503 (DAQVFQVTIR…QRTFVQDWDE (115 aa)) constitute an SEA 1 domain. Positions 500–545 (DWDECAHSSEHDCHPSARCINLEGSYTCQCLTARDASPSRAGRVCE) constitute an EGF-like 2; calcium-binding domain. Cystine bridges form between Cys-504–Cys-518, Cys-512–Cys-527, and Cys-529–Cys-544. 2 disordered regions span residues 569–649 (TGIT…ITKD) and 664–703 (HSSP…PESP). Positions 619-632 (TGQGQTHGTHQGTT) are enriched in low complexity. Residues 638 to 647 (TTRESQELIT) are compositionally biased toward basic and acidic residues. Residues 664-678 (HSSPTWKTPPNSTRL) are compositionally biased toward polar residues. A Fibronectin type-III 2 domain is found at 709–795 (PIGKVTVSNV…QLKVRTVAQK (87 aa)). 2 N-linked (GlcNAc...) asparagine glycosylation sites follow: Asn-717 and Asn-757. Positions 792–904 (VAQKLAGNVR…GKTFMQDYNE (113 aa)) constitute an SEA 2 domain. Residues 901–945 (DYNECDMKEDDCAPGTCRNTFGSFTCSCDEGGPDSQVEYSGRSCD) enclose the EGF-like 3; calcium-binding domain. Cystine bridges form between Cys-905–Cys-917, Cys-912–Cys-926, and Cys-928–Cys-944. Residues 939–966 (YSGRSCDGDPSGNMTQTPGSEWSPTPAG) form a disordered region. Polar residues predominate over residues 950 to 961 (GNMTQTPGSEWS). A glycan (N-linked (GlcNAc...) asparagine) is linked at Asn-951. The ZP domain maps to 995–1238 (SCEIETVIIT…NSCRISCNDF (244 aa)). An intrachain disulfide couples Cys-1160 to Cys-1218. Residues 1274-1294 (IILLAAAALLVVAGATTLLIL) form a helical membrane-spanning segment. Topologically, residues 1295-1319 (RYQRVRQKYNLRIQTDDFSYQVFSQ) are cytoplasmic.

It is found in the cell membrane. This chain is Uromodulin-like 1 (Umodl1), found in Mus musculus (Mouse).